Reading from the N-terminus, the 448-residue chain is Exodeoxyribonuclease 7 large subunit (448 aa).

It belongs to the XseA family. Heterooligomer composed of large and small subunits.

The protein resides in the cytoplasm. The enzyme catalyses Exonucleolytic cleavage in either 5'- to 3'- or 3'- to 5'-direction to yield nucleoside 5'-phosphates.. Bidirectionally degrades single-stranded DNA into large acid-insoluble oligonucleotides, which are then degraded further into small acid-soluble oligonucleotides. This is Exodeoxyribonuclease 7 large subunit from Shewanella baltica (strain OS195).